The chain runs to 154 residues: AP-1 complex subunit sigma-2 (154 aa).

Belongs to the adaptor complexes small subunit family. Adaptor protein complex 1 (AP-1) is a heterotetramer composed of two large adaptins (gamma-type subunit and beta-type subunit), a medium adaptin (mu-type subunit) and a small adaptin (sigma-type subunit).

It is found in the golgi apparatus. The protein localises to the trans-Golgi network. The protein resides in the cytoplasmic vesicle. Its subcellular location is the clathrin-coated vesicle membrane. Functionally, subunit of clathrin-associated adaptor protein complex 1 that plays a role in protein sorting in the trans-Golgi network (TGN) and endosomes. The AP complexes mediate the recruitment of clathrin to membranes and the recognition of sorting signals within the cytosolic tails of transmembrane cargo molecules. Also involved in early steps of phagocytosis and macropinocytosis. This is AP-1 complex subunit sigma-2 (ap1s2) from Dictyostelium discoideum (Social amoeba).